A 204-amino-acid polypeptide reads, in one-letter code: Transmembrane protein 186 (204 aa).

Over 1–69 the chain is Mitochondrial matrix; the sequence is MLELLCRVSP…RLVAALSRLK (69 aa). Residues 70 to 90 form a helical membrane-spanning segment; it reads VYQAVITAAGTPIVFALGSAG. The Mitochondrial intermembrane segment spans residues 91-95; it reads QLSTD. The chain crosses the membrane as a helical span at residues 96–116; it reads ALAIYAAIGVTGLITLTLASY. Topologically, residues 117 to 204 are mitochondrial matrix; that stretch reads ASSNLVGFIY…RQLFEGLFGN (88 aa).

This sequence belongs to the TMEM186 family. As to quaternary structure, associates with mitochondrial complex I assembly intermediates during its biogenesis.

It localises to the mitochondrion inner membrane. As part of the MCIA complex, required for efficient assembly of the mitochondrial complex I. In Drosophila melanogaster (Fruit fly), this protein is Transmembrane protein 186.